The following is a 470-amino-acid chain: Aminoacyl transferase sphA (470 aa).

Pyridoxal 5'-phosphate contacts are provided by S212, H244, and T272. K275 is modified (N6-(pyridoxal phosphate)lysine).

This sequence belongs to the class-II pyridoxal-phosphate-dependent aminotransferase family. BioF subfamily. In terms of assembly, homodimer. The cofactor is pyridoxal 5'-phosphate.

The protein operates within secondary metabolite biosynthesis. Functionally, aminoacyl transferase; part of the gene cluster that mediates the biosynthesis of sphingofungins, bioactive molecules acting as sphingolipid inhibitors via inhibiting serine palmitoyl transferase (SPT). Within the pathway, sphA transfers 2-methyl-aminomalonate and 2-hydroxymethyl-aminomalonate onto the sphB product 3-hydroxyoctadeca-4,10-dienoyl-ACP to produce the precursors of sphingofungins E and F. The substrate specificity of sphA using 2-methyl-aminomalonate and 2-hydroxymethyl-aminomalonate instread of aminomalonate is responsible for the biosynthesis of sphingofungins E and F but not B and C like in Aspergillus fumigatus. The PKS sphB does not contain any putative thioesterase domain for releasing the nascent polyketide chain and it has been suggested that aminoacyl transferases can facilitate the polyketide chain release. This Byssochlamys spectabilis (Paecilomyces variotii) protein is Aminoacyl transferase sphA.